We begin with the raw amino-acid sequence, 190 residues long: Selenoprotein S (190 aa).

The helical transmembrane segment at 28–48 (SLLATYGWYIVFCCILLYVVF) threads the bilayer. The segment at 78 to 90 (RQEALAAARLKMQ) is VCP/p97-interacting motif (VIM). Over residues 115–138 (KIERWDSVQEGRSYRGDARKRQEE) the composition is skewed to basic and acidic residues. Positions 115-190 (KIERWDSVQE…RRGPSSGGUG (76 aa)) are disordered. Ser-140 is subject to Phosphoserine. Residues 160–174 (RGGGYNPLSGEGGGA) show a composition bias toward gly residues. A non-standard amino acid (selenocysteine) is located at residue Sec-189.

The protein belongs to the selenoprotein S family. Interacts with DERL1 and (via VIM motif) with VCP, suggesting that it forms a membrane complex with DERL1 that serves as a receptor for VCP. Also interacts with DERL2, DERL3 and SELENOK. The SELENOK-SELENOS complex interacts with VCP. In terms of processing, truncated SELENOS proteins produced by failed UGA/Sec decoding are ubiquitinated by the CRL2(KLHDC2) and CRL2(KLHDC3) complexes, which recognizes the glycine (Gly) at the C-terminus of truncated SELENOS proteins. Truncated SELENOS proteins produced by failed UGA/Sec decoding are also ubiquitinated by the CRL5(KLHDC1) complex. As to expression, ubiquitously expressed. Highest expression in liver and lung, with lower levels detected in spleen, kidney, brain, lymph nodes, small intestine, stomach and heart. Very low expression detected in longissimus dorsi.

The protein localises to the cytoplasm. The protein resides in the endoplasmic reticulum membrane. Involved in the degradation process of misfolded endoplasmic reticulum (ER) luminal proteins. Participates in the transfer of misfolded proteins from the ER to the cytosol, where they are destroyed by the proteasome in a ubiquitin-dependent manner. Probably acts by serving as a linker between DERL1, which mediates the retrotranslocation of misfolded proteins into the cytosol, and the ATPase complex VCP, which mediates the translocation and ubiquitination. This is Selenoprotein S from Sus scrofa (Pig).